Consider the following 39-residue polypeptide: Cytochrome b559 subunit beta (39 aa).

Residues 14-30 form a helical membrane-spanning segment; it reads WLAIHGLAVPTVFSLGS. Histidine 18 contributes to the heme binding site.

The protein belongs to the PsbE/PsbF family. In terms of assembly, heterodimer of an alpha subunit and a beta subunit. PSII is composed of 1 copy each of membrane proteins PsbA, PsbB, PsbC, PsbD, PsbE, PsbF, PsbH, PsbI, PsbJ, PsbK, PsbL, PsbM, PsbT, PsbX, PsbY, PsbZ, Psb30/Ycf12, at least 3 peripheral proteins of the oxygen-evolving complex and a large number of cofactors. It forms dimeric complexes. Requires heme b as cofactor.

It localises to the plastid. It is found in the chloroplast thylakoid membrane. In terms of biological role, this b-type cytochrome is tightly associated with the reaction center of photosystem II (PSII). PSII is a light-driven water:plastoquinone oxidoreductase that uses light energy to abstract electrons from H(2)O, generating O(2) and a proton gradient subsequently used for ATP formation. It consists of a core antenna complex that captures photons, and an electron transfer chain that converts photonic excitation into a charge separation. This chain is Cytochrome b559 subunit beta, found in Huperzia lucidula (Shining clubmoss).